The chain runs to 239 residues: Ribonuclease P protein component 3 (239 aa).

The protein belongs to the eukaryotic/archaeal RNase P protein component 3 family. As to quaternary structure, consists of a catalytic RNA component and at least 4-5 protein subunits.

The protein resides in the cytoplasm. It catalyses the reaction Endonucleolytic cleavage of RNA, removing 5'-extranucleotides from tRNA precursor.. Part of ribonuclease P, a protein complex that generates mature tRNA molecules by cleaving their 5'-ends. The polypeptide is Ribonuclease P protein component 3 (Methanosarcina barkeri (strain Fusaro / DSM 804)).